A 27-amino-acid polypeptide reads, in one-letter code: Kunitz-type serine protease inhibitor 3 (27 aa).

Positions 1–27 (EVHNFACLGKPDPGGCAHYIYRRYYYV) constitute a BPTI/Kunitz inhibitor domain.

Its subcellular location is the secreted. In terms of biological role, inhibits bovine trypsin and human neutrophil elastase. This is Kunitz-type serine protease inhibitor 3 from Rhipicephalus microplus (Cattle tick).